The primary structure comprises 94 residues: C-C motif chemokine 26 (94 aa).

The signal sequence occupies residues 1–23; it reads MKSFPVAFLVLLIFILSVHRGVT. 2 cysteine pairs are disulfide-bonded: Cys33-Cys57 and Cys34-Cys73.

The protein belongs to the intercrine beta (chemokine CC) family. As to quaternary structure, monomer.

It localises to the secreted. Chemoattractant for eosinophils and basophils. Acts as a ligand for C-C chemokine receptor CCR3 which triggers Ca(2+) mobilization in eosinophils. Also acts as a ligand for CX3C chemokine receptor CX3CR1, inducing cell chemotaxis. The sequence is that of C-C motif chemokine 26 from Canis lupus familiaris (Dog).